Here is a 243-residue protein sequence, read N- to C-terminus: Triosephosphate isomerase (243 aa).

9-11 (NWK) contributes to the substrate binding site. The Electrophile role is filled by histidine 96. The active-site Proton acceptor is the glutamate 165. Residues glycine 171, serine 204, and 225–226 (GG) each bind substrate.

It belongs to the triosephosphate isomerase family. As to quaternary structure, homodimer.

The protein localises to the cytoplasm. It carries out the reaction D-glyceraldehyde 3-phosphate = dihydroxyacetone phosphate. It functions in the pathway carbohydrate biosynthesis; gluconeogenesis. It participates in carbohydrate degradation; glycolysis; D-glyceraldehyde 3-phosphate from glycerone phosphate: step 1/1. Involved in the gluconeogenesis. Catalyzes stereospecifically the conversion of dihydroxyacetone phosphate (DHAP) to D-glyceraldehyde-3-phosphate (G3P). The protein is Triosephosphate isomerase of Prochlorococcus marinus (strain MIT 9211).